The primary structure comprises 804 residues: Leucine--tRNA ligase (804 aa).

The 'HIGH' region signature appears at 39–50; the sequence is PYPSGKGLHVGH. The 'KMSKS' region motif lies at 573–577; that stretch reads KMSKS. Lys576 is a binding site for ATP.

The protein belongs to the class-I aminoacyl-tRNA synthetase family.

Its subcellular location is the cytoplasm. It catalyses the reaction tRNA(Leu) + L-leucine + ATP = L-leucyl-tRNA(Leu) + AMP + diphosphate. This chain is Leucine--tRNA ligase, found in Lactobacillus delbrueckii subsp. bulgaricus (strain ATCC BAA-365 / Lb-18).